Here is a 97-residue protein sequence, read N- to C-terminus: Putative mitochondrial import inner membrane translocase subunit Tim8 A-B (97 aa).

The short motif at 43-66 (CWEKCMDKPGPRLDGRAELCLVNC) is the Twin CX3C motif element. 2 disulfide bridges follow: Cys43–Cys66 and Cys47–Cys62.

This sequence belongs to the small Tim family. In terms of assembly, heterohexamer; possibly composed of 3 copies of TIMM8AB and 3 copies of TIMM13.

The protein localises to the mitochondrion inner membrane. Functionally, putative mitochondrial intermembrane chaperone that participates in the import and insertion of some multi-pass transmembrane proteins into the mitochondrial inner membrane. Also required for the transfer of beta-barrel precursors from the TOM complex to the sorting and assembly machinery (SAM complex) of the outer membrane. Acts as a chaperone-like protein that protects the hydrophobic precursors from aggregation and guide them through the mitochondrial intermembrane space. This is Putative mitochondrial import inner membrane translocase subunit Tim8 A-B (Timm8a2) from Mus musculus (Mouse).